A 410-amino-acid polypeptide reads, in one-letter code: Platelet-activating factor acetylhydrolase IB subunit beta (410 aa).

The tract at residues 1–38 (MVLSQRQRDELNRAIADYLRSNGYEEAYSVFKKEAELD) is required for self-association and interaction with PAFAH1B2 and PAFAH1B3. The interval 1–66 (MVLSQRQRDE…SVIRLQKKVM (66 aa)) is interaction with NDE1. An interaction with NDEL1 region spans residues 1–102 (MVLSQRQRDE…EWIPRPPEKY (102 aa)). The 33-residue stretch at 7 to 39 (QRDELNRAIADYLRSNGYEEAYSVFKKEAELDM) folds into the LisH domain. The residue at position 53 (lysine 53) is an N6-acetyllysine. Positions 56-82 (TSVIRLQKKVMELESKLNEAKEEFTSG) form a coiled coil. The interval 83-410 (GPLGQKRDPK…DQTVKVWECR (328 aa)) is interaction with dynein and dynactin. 7 WD repeats span residues 106-147 (GHRS…RTLK), 148-187 (GHTD…CIRT), 190-229 (GHDH…CVKT), 232-271 (GHRE…CKAE), 274-333 (EHEH…CLMT), 336-377 (GHDN…KTLN), and 378-410 (AHEH…WECR). Serine 109 carries the phosphoserine modification. Residues 367–409 (YKNKRCMKTLNAHEHFVTSLDFHKTAPYVVTGSVDQTVKVWEC) form an interaction with DCX region. Residues 388-410 (FHKTAPYVVTGSVDQTVKVWECR) form an interaction with NDEL1 region.

It belongs to the WD repeat LIS1/nudF family. In terms of assembly, can self-associate. Component of the cytosolic PAF-AH (I) heterotetrameric enzyme, which is composed of PAFAH1B1 (beta), PAFAH1B2 (alpha2) and PAFAH1B3 (alpha1) subunits. The catalytic activity of the enzyme resides in the alpha1 (PAFAH1B3) and alpha2 (PAFAH1B2) subunits, whereas the beta subunit (PAFAH1B1) has regulatory activity. Trimer formation is not essential for the catalytic activity. Interacts with the catalytic dimer of PAF-AH (I) heterotetrameric enzyme: interacts with PAFAH1B2 homodimer (alpha2/alpha2 homodimer), PAFAH1B3 homodimer (alpha1/alpha1 homodimer) and PAFAH1B2-PAFAH1B3 heterodimer (alpha2/alpha1 heterodimer). Interacts with DCX, dynein, dynactin, IQGAP1, KATNB1, NDE1, NDEL1, NUDC and RSN. Interacts with DISC1, and this interaction is enhanced by NDEL1. Interacts with DAB1 when DAB1 is phosphorylated in response to RELN/reelin signaling. Interacts with INTS13. Interacts with DCDC1.

The protein resides in the cytoplasm. The protein localises to the cytoskeleton. It localises to the microtubule organizing center. Its subcellular location is the centrosome. It is found in the spindle. The protein resides in the nucleus membrane. Functionally, regulatory subunit (beta subunit) of the cytosolic type I platelet-activating factor (PAF) acetylhydrolase (PAF-AH (I)), an enzyme that catalyzes the hydrolyze of the acetyl group at the sn-2 position of PAF and its analogs and participates in PAF inactivation. Regulates the PAF-AH (I) activity in a catalytic dimer composition-dependent manner. Positively regulates the activity of the minus-end directed microtubule motor protein dynein. May enhance dynein-mediated microtubule sliding by targeting dynein to the microtubule plus end. Required for several dynein- and microtubule-dependent processes such as the maintenance of Golgi integrity, the peripheral transport of microtubule fragments and the coupling of the nucleus and centrosome. Required during brain development for the proliferation of neuronal precursors and the migration of newly formed neurons from the ventricular/subventricular zone toward the cortical plate. Neuronal migration involves a process called nucleokinesis, whereby migrating cells extend an anterior process into which the nucleus subsequently translocates. During nucleokinesis dynein at the nuclear surface may translocate the nucleus towards the centrosome by exerting force on centrosomal microtubules. Also required for proper activation of Rho GTPases and actin polymerization at the leading edge of locomoting cerebellar neurons and postmigratory hippocampal neurons in response to calcium influx triggered via NMDA receptors. May also play a role in other forms of cell locomotion including the migration of fibroblasts during wound healing. Required for dynein recruitment to microtubule plus ends and BICD2-bound cargos. May modulate the Reelin pathway through interaction of the PAF-AH (I) catalytic dimer with VLDLR. This chain is Platelet-activating factor acetylhydrolase IB subunit beta, found in Felis catus (Cat).